We begin with the raw amino-acid sequence, 629 residues long: Chaperone protein HtpG (629 aa).

Residues 1–336 are a; substrate-binding; the sequence is MSSTENNGTA…TEDLSLNVSR (336 aa). Residues 337 to 549 form a b region; it reads EMVQSSPVMA…KDAIDSQLER (213 aa). Positions 550 to 629 are c; that stretch reads MMKMMNTPMP…ELIEAATLTR (80 aa).

The protein belongs to the heat shock protein 90 family. In terms of assembly, homodimer.

The protein resides in the cytoplasm. Its function is as follows. Molecular chaperone. Has ATPase activity. This is Chaperone protein HtpG from Chlorobium chlorochromatii (strain CaD3).